Here is a 311-residue protein sequence, read N- to C-terminus: Apulose-4-phosphate transketolase subunit B (311 aa).

Belongs to the transketolase family. In terms of assembly, probable heterodimer composed of AptA and AptB. Requires thiamine diphosphate as cofactor.

It catalyses the reaction apulose 4-phosphate + D-glyceraldehyde 3-phosphate = D-xylulose 5-phosphate + dihydroxyacetone phosphate. It participates in carbohydrate metabolism. In terms of biological role, involved in catabolism of D-apiose. Catalyzes the transfer of the glycolaldehyde group from apulose-4-phosphate to D-glyceraldehyde 3-phosphate, generating dihydroxyacetone phosphate and D-xylulose-5-phosphate. In Actinobacillus succinogenes (strain ATCC 55618 / DSM 22257 / CCUG 43843 / 130Z), this protein is Apulose-4-phosphate transketolase subunit B.